We begin with the raw amino-acid sequence, 330 residues long: GTPase Obg (330 aa).

Positions 1–159 (MHFIDEVKIY…MWIHLRLKLL (159 aa)) constitute an Obg domain. In terms of domain architecture, OBG-type G spans 160–327 (SDVGLVGLPN…IVKLALEIIK (168 aa)). Residues 166–173 (GLPNAGKS), 191–195 (FTTLV), 212–215 (DIPG), 279–282 (NKCD), and 308–310 (STY) each bind GTP. Mg(2+) contacts are provided by Ser-173 and Thr-193.

Belongs to the TRAFAC class OBG-HflX-like GTPase superfamily. OBG GTPase family. In terms of assembly, monomer. It depends on Mg(2+) as a cofactor.

The protein localises to the cytoplasm. Functionally, an essential GTPase which binds GTP, GDP and possibly (p)ppGpp with moderate affinity, with high nucleotide exchange rates and a fairly low GTP hydrolysis rate. Plays a role in control of the cell cycle, stress response, ribosome biogenesis and in those bacteria that undergo differentiation, in morphogenesis control. The chain is GTPase Obg from Rickettsia typhi (strain ATCC VR-144 / Wilmington).